The sequence spans 140 residues: Ribonuclease P protein component (140 aa).

This sequence belongs to the RnpA family. In terms of assembly, consists of a catalytic RNA component (M1 or rnpB) and a protein subunit.

The enzyme catalyses Endonucleolytic cleavage of RNA, removing 5'-extranucleotides from tRNA precursor.. Its function is as follows. RNaseP catalyzes the removal of the 5'-leader sequence from pre-tRNA to produce the mature 5'-terminus. It can also cleave other RNA substrates such as 4.5S RNA. The protein component plays an auxiliary but essential role in vivo by binding to the 5'-leader sequence and broadening the substrate specificity of the ribozyme. In Nostoc sp. (strain PCC 7120 / SAG 25.82 / UTEX 2576), this protein is Ribonuclease P protein component.